The primary structure comprises 1671 residues: AF4/FMR2 family member lilli (1671 aa).

Disordered stretches follow at residues 53–79 (YSQN…QQGI), 126–304 (SAPG…EKDV), 393–599 (LAGE…SNKW), 723–761 (DSGT…QLPG), 774–1162 (PTQS…TTPH), and 1185–1311 (KLTP…LQIG). Residues 70–79 (REKIERQQGI) are compositionally biased toward basic and acidic residues. Composition is skewed to low complexity over residues 145–179 (SLGH…QQQQ) and 210–242 (PSSS…SSGG). The residue at position 416 (Thr416) is a Phosphothreonine. The span at 424–437 (LKTEKNHSLEKQDS) shows a compositional bias: basic and acidic residues. Acidic residues predominate over residues 439 to 450 (LENDLELSESED). Ser446 and Ser448 each carry phosphoserine. Positions 459 to 479 (SAGNSSNSSESDSSESGSESS) are enriched in low complexity. Over residues 487-496 (HPNHQQHHHQ) the composition is skewed to basic residues. Composition is skewed to low complexity over residues 497 to 522 (LQQQ…PQPL) and 561 to 587 (PAGV…GSSS). Residues 588–599 (NKTPSPTESNKW) show a composition bias toward polar residues. A compositionally biased stretch (low complexity) spans 723–755 (DSGTSASGSSSSSSSSSDSAVGGEVVPMPGPGE). A compositionally biased stretch (polar residues) spans 774–786 (PTQSQKAPPSNSV). The segment covering 800-810 (QRQKKPRKKKA) has biased composition (basic residues). Ser819 and Ser820 each carry phosphoserine. A DNA-binding region (a.T hook) is located at residues 849–861 (KKGRGRPRKQQQS). Positions 858–896 (QQQSGGSGNLSSASAGSSSQTKGPTLTAAKKPLAKTPLA) are enriched in low complexity. Residues Ser869 and Ser871 each carry the phosphoserine modification. Polar residues predominate over residues 907–917 (SQSSSNGNTPT). 2 stretches are compositionally biased toward low complexity: residues 947–963 (SSSA…SSSS) and 988–1002 (ALLG…SSGS). Polar residues predominate over residues 1009–1020 (SRSQVGSGQALA). Over residues 1032–1058 (SQHSQHLSSSECSSSSGGCTAVCSSSS) the composition is skewed to low complexity. The segment covering 1063–1080 (EGRREKERERKPKSDKNK) has biased composition (basic and acidic residues). Pro residues predominate over residues 1120-1130 (QPPPPHAPPAA). The span at 1188–1203 (PAQQNGHLTPKDQATN) shows a compositional bias: polar residues. Basic and acidic residues-rich tracts occupy residues 1224-1241 (EHPV…EAKF) and 1250-1280 (FQLK…EQPP). At Ser1360 the chain carries Phosphoserine. The residue at position 1362 (Thr1362) is a Phosphothreonine. Low complexity predominate over residues 1562-1581 (NTPSSISPSNSVGSQGSGSN). The disordered stretch occupies residues 1562-1586 (NTPSSISPSNSVGSQGSGSNTPPGR).

This sequence belongs to the AF4 family.

The protein localises to the nucleus. Its function is as follows. Has a role in transcriptional regulation. Acts in parallel with the Ras/MAPK and the PI3K/PKB pathways in the control of cell identity and cellular growth. Essential for regulation of the cytoskeleton and cell growth but not for cell proliferation or growth rate. Required specifically for the microtubule-based basal transport of lipid droplets. Plays a partially redundant function downstream of Raf in cell fate specification in the developing eye. Pair-rule protein that regulates embryonic cellularization, gastrulation and segmentation. The chain is AF4/FMR2 family member lilli from Drosophila yakuba (Fruit fly).